The chain runs to 1299 residues: Protein prickle (1299 aa).

Residues 1–19 (MSSLSTGGGAGGSSGGPGG) are compositionally biased toward gly residues. Disordered regions lie at residues 1–24 (MSSL…DAAA), 115–181 (ADDG…EVTQ), 241–289 (EEES…PQVP), 368–396 (LPRH…PSSS), and 425–527 (LPPH…DDDS). A compositionally biased stretch (basic residues) spans 145–159 (SPRRSKKLLRSLRAH). The segment covering 168 to 181 (NDTTTANESSEVTQ) has biased composition (polar residues). Positions 263 to 272 (PVPPLPPPPA) are enriched in pro residues. Positions 425–434 (LPPHHQQHPG) are enriched in low complexity. Residues 435 to 445 (AGMGPGPGSGA) are compositionally biased toward gly residues. Positions 457–469 (PGCSANPKYSNAQ) are enriched in polar residues. One can recognise a PET domain in the interval 515–623 (MDMQRQSHSD…NVRQLMSARP (109 aa)). The span at 516-525 (DMQRQSHSDD) shows a compositional bias: basic and acidic residues. 3 LIM zinc-binding domains span residues 622–686 (RPCD…ETLK), 687–747 (PRCS…MFAE), and 748–810 (YCDY…GEPP). Disordered stretches follow at residues 807-865 (GEPP…HQAT), 902-940 (KDLE…GDFQ), and 1026-1249 (ADIL…SSSS). Positions 844 to 864 (PSSHASSSPPMSPQQQQQHQA) are enriched in low complexity. 2 stretches are compositionally biased toward polar residues: residues 922-934 (RASS…SPLN) and 1070-1081 (SLNTPMSTQSAS). A compositionally biased stretch (low complexity) spans 1089–1101 (SILSGASSSSPMS). The span at 1136-1150 (GERERDRDKDKEGGG) shows a compositional bias: basic and acidic residues. The span at 1151 to 1183 (RHGHGHSSRRRRRRKSSSSSSHHRSGSGHRSHS) shows a compositional bias: basic residues. The span at 1216 to 1231 (SPSRQQRERERERERE) shows a compositional bias: basic and acidic residues. Low complexity predominate over residues 1238–1249 (VCSTCSSSSSSS).

The protein belongs to the prickle / espinas / testin family. As to quaternary structure, interacts with dsh; PET and LIM domains interact with dsh DEP domain, in wing cells. Interacts with Vang in photoreceptor cells. As to expression, expressed in the wing, leg and eye imaginal disks. Expressed within the photoreceptors of the eye.

It localises to the cell membrane. Its function is as follows. Acts in a planar cell polarity (PCP) complex; polarization along the apical/basal axis of epithelial cells. Correct expression of the alternative isoforms is required for PCP signaling in imaginal disks. PCP signaling in the wing disk requires the receptor fz and the cytoplasmic proteins dsh and pk. These act in a feedback loop leading to activation of the jnk cascade and subsequent polarized arrangement of hairs and bristles. Dgo and pk compete with one another for dsh binding, thereby modulating fz dsh activity and ensuring tight control over fz PCP signaling. Vang, stan and pk function together to regulate the establishment of tissue polarity in the adult eye. In Drosophila melanogaster (Fruit fly), this protein is Protein prickle.